Reading from the N-terminus, the 1183-residue chain is Chromosome partition protein Smc (1183 aa).

32–39 contributes to the ATP binding site; it reads PNGSGKSN. Positions 162–483 form a coiled coil; it reads EEAAGIKKLQ…KLSQDIREFE (322 aa). The 114-residue stretch at 519–632 folds into the SMC hinge domain; the sequence is SGIDGVLISL…VENIDIATDI (114 aa). Positions 666–1019 form a coiled coil; sequence INQIFERKKE…VMDLIQEIDE (354 aa).

This sequence belongs to the SMC family. Homodimer.

The protein resides in the cytoplasm. Its function is as follows. Required for chromosome condensation and partitioning. This Fusobacterium nucleatum subsp. nucleatum (strain ATCC 25586 / DSM 15643 / BCRC 10681 / CIP 101130 / JCM 8532 / KCTC 2640 / LMG 13131 / VPI 4355) protein is Chromosome partition protein Smc.